A 241-amino-acid chain; its full sequence is MIVIPAIDLFDNCAVRLFKGNYEEKKIYSSEPWKLAESFAKNGATLLHLVDLNGARNQLGVNEDSILKIRETTSLKVQLGGGIRDKEKLAYYDKIGINRFILGTAAVTNPDLLKYALDNYGKERVVVAVDARDGIVKIAGWEKDSGIHYRDLLERLVKAGIEHIVFTDIAQDGTLAGPNLEAYREILNSYPFQVIASGGIASLKDLMDLSSLKTKISLYGVITGKALYEGKLDLAKAISSI.

D8 serves as the catalytic Proton acceptor. Catalysis depends on D130, which acts as the Proton donor.

This sequence belongs to the HisA/HisF family.

The protein resides in the cytoplasm. The enzyme catalyses 1-(5-phospho-beta-D-ribosyl)-5-[(5-phospho-beta-D-ribosylamino)methylideneamino]imidazole-4-carboxamide = 5-[(5-phospho-1-deoxy-D-ribulos-1-ylimino)methylamino]-1-(5-phospho-beta-D-ribosyl)imidazole-4-carboxamide. Its pathway is amino-acid biosynthesis; L-histidine biosynthesis; L-histidine from 5-phospho-alpha-D-ribose 1-diphosphate: step 4/9. This chain is 1-(5-phosphoribosyl)-5-[(5-phosphoribosylamino)methylideneamino] imidazole-4-carboxamide isomerase, found in Leptospira interrogans serogroup Icterohaemorrhagiae serovar copenhageni (strain Fiocruz L1-130).